Here is a 669-residue protein sequence, read N- to C-terminus: Dymeclin (669 aa).

Glycine 2 carries N-myristoyl glycine lipidation.

Belongs to the dymeclin family. In terms of processing, myristoylated in vitro; myristoylation is not essential for protein targeting to Golgi compartment.

The protein localises to the cytoplasm. Its subcellular location is the golgi apparatus. Functionally, necessary for correct organization of Golgi apparatus. This is Dymeclin (DYM) from Gallus gallus (Chicken).